Here is a 371-residue protein sequence, read N- to C-terminus: Beta-1,3-galactosyltransferase 4 (371 aa).

Over 1–4 the chain is Cytoplasmic; the sequence is MPLS. The helical; Signal-anchor for type II membrane protein transmembrane segment at 5-25 threads the bilayer; sequence LFRRVLLAVLLLVIIWTLFGP. Residues 26–371 lie on the Lumenal side of the membrane; the sequence is SGLGEELLSL…RCRFIAWFSS (346 aa). N-linked (GlcNAc...) asparagine glycosylation occurs at Asn143.

Belongs to the glycosyltransferase 31 family. Expressed in heart, brain, spleen, kidney, lung and testis.

The protein localises to the golgi apparatus membrane. It catalyses the reaction a ganglioside GM2 (d18:1(4E)) + UDP-alpha-D-galactose = a ganglioside GM1 (d18:1(4E)) + UDP + H(+). The catalysed reaction is a ganglioside GM2 + UDP-alpha-D-galactose = a ganglioside GM1 + UDP + H(+). The enzyme catalyses a ganglioside GD2 (d18:1(4E)) + UDP-alpha-D-galactose = a ganglioside GD1b (d18:1(4E)) + UDP + H(+). It carries out the reaction a ganglioside GA2 (d18:1(4E)) + UDP-alpha-D-galactose = a ganglioside GA1 (d18:1(4E)) + UDP + H(+). It participates in protein modification; protein glycosylation. Its function is as follows. Involved in GM1/GD1B/GA1 ganglioside biosynthesis. The polypeptide is Beta-1,3-galactosyltransferase 4 (Mus musculus (Mouse)).